A 431-amino-acid polypeptide reads, in one-letter code: Tyrosine--tRNA ligase (431 aa).

Y34 provides a ligand contact to L-tyrosine. The 'HIGH' region signature appears at 39-48 (PTADSLHIGH). Residues Y171 and Q175 each coordinate L-tyrosine. The 'KMSKS' region signature appears at 231–235 (KFGKT). Residue K234 participates in ATP binding. The 70-residue stretch at 353–422 (INVVEALVKT…GKYTILRRGK (70 aa)) folds into the S4 RNA-binding domain.

This sequence belongs to the class-I aminoacyl-tRNA synthetase family. TyrS type 1 subfamily. As to quaternary structure, homodimer.

Its subcellular location is the cytoplasm. It catalyses the reaction tRNA(Tyr) + L-tyrosine + ATP = L-tyrosyl-tRNA(Tyr) + AMP + diphosphate + H(+). Functionally, catalyzes the attachment of tyrosine to tRNA(Tyr) in a two-step reaction: tyrosine is first activated by ATP to form Tyr-AMP and then transferred to the acceptor end of tRNA(Tyr). This chain is Tyrosine--tRNA ligase, found in Neisseria meningitidis serogroup C / serotype 2a (strain ATCC 700532 / DSM 15464 / FAM18).